We begin with the raw amino-acid sequence, 229 residues long: Cytidylate kinase (229 aa).

12–20 (GPSGAGKGT) is a binding site for ATP.

It belongs to the cytidylate kinase family. Type 1 subfamily.

It localises to the cytoplasm. The catalysed reaction is CMP + ATP = CDP + ADP. The enzyme catalyses dCMP + ATP = dCDP + ADP. The polypeptide is Cytidylate kinase (Serratia proteamaculans (strain 568)).